The sequence spans 735 residues: Muskelin (735 aa).

Ala-2 is modified (N-acetylalanine). The 33-residue stretch at 172 to 204 folds into the LisH domain; it reads REQEAIRLCLKHFRQHNYTEAFESLQKKTKIAL. Residues 206 to 258 enclose the CTLH domain; sequence HPMLTDIHDKLVLKGDFDACEELIEKAVNDGLFNQYISQQEYKPRWSQIIPKS. Kelch repeat units follow at residues 284–330, 339–391, 408–458, 469–515, 526–578, and 597–651; these read TVYL…SCHK, QIYT…FDHQ, ILTC…SRIG, CLYV…TGFT, EIHV…SLQE, and VHYL…AQMD.

Homodimer; may form higher oligomers. Identified in the CTLH complex that contains GID4, RANBP9 and/or RANBP10, MKLN1, MAEA, RMND5A (or alternatively its paralog RMND5B), GID8, ARMC8, WDR26 and YPEL5. Within this complex, MAEA, RMND5A (or alternatively its paralog RMND5B), GID8, WDR26, and RANBP9 and/or RANBP10 form the catalytic core, while GID4, MKLN1, ARMC8 and YPEL5 have ancillary roles. Interacts with RANBP9. Part of a complex consisting of RANBP9, MKLN1 and GID8. Interacts with GABRA1. Interacts with the C-terminal tail of PTGER3.

The protein resides in the cytoplasm. The protein localises to the cytosol. It localises to the nucleus. It is found in the nucleoplasm. Its subcellular location is the cell projection. The protein resides in the ruffle. The protein localises to the cell cortex. It localises to the synapse. It is found in the postsynapse. Functionally, component of the CTLH E3 ubiquitin-protein ligase complex that selectively accepts ubiquitin from UBE2H and mediates ubiquitination and subsequent proteasomal degradation of the transcription factor HBP1. Required for internalization of the GABA receptor GABRA1 from the cell membrane via endosomes and subsequent GABRA1 degradation. Acts as a mediator of cell spreading and cytoskeletal responses to the extracellular matrix component THBS1. This is Muskelin (MKLN1) from Pongo abelii (Sumatran orangutan).